The primary structure comprises 425 residues: MTAIIDIVGREILDSRGNPTVEVDVVLEDGSFGRAAVPSGASTGAHEAVELRDGGSRYLGKGVEKAVEVVNGKIFDAIAGMDAENQLLIDQTLIDLDGSANKGNLGANAILGVSLAVAKAAAQASGLPLYRYVGGTNAHVLPVPMMNIINGGAHADNPIDFQEFMILPVGATSIREAVRYGSEVFHTLKKRLKDAGHNTNVGDEGGFAPNLKNAQAALDFIMESIEKAGFKPGEDIALGLDCAATEFFKDGNYVYEGERKTRDPKAQAKYLAKLASDYPIVTIEDGMAEDDWEGWKYLTDLIGNKCQLVGDDLFVTNSARLRDGIRLGVANSILVKVNQIGSLSETLDAVETAHKAGYTAVMSHRSGETEDSTIADLAVATNCGQIKTGSLARSDRTAKYNQLIRIEEELGKQARYAGRSALKLL.

Q162 contacts (2R)-2-phosphoglycerate. The active-site Proton donor is the E204. Residues D241, E284, and D311 each contribute to the Mg(2+) site. Residues K336, R365, S366, and K387 each contribute to the (2R)-2-phosphoglycerate site. The active-site Proton acceptor is K336.

It belongs to the enolase family. Mg(2+) serves as cofactor.

It is found in the cytoplasm. The protein localises to the secreted. It localises to the cell surface. It catalyses the reaction (2R)-2-phosphoglycerate = phosphoenolpyruvate + H2O. Its pathway is carbohydrate degradation; glycolysis; pyruvate from D-glyceraldehyde 3-phosphate: step 4/5. Catalyzes the reversible conversion of 2-phosphoglycerate (2-PG) into phosphoenolpyruvate (PEP). It is essential for the degradation of carbohydrates via glycolysis. The protein is Enolase of Brucella ovis (strain ATCC 25840 / 63/290 / NCTC 10512).